The following is a 102-amino-acid chain: MYAIIEAGGKQFCVEEGSKIFVSKIDAEVGTEIFFDKIFMIGGSSPQIGTPYINNAKVIAKVLEHGRDKKILVFKKWRRNDSRKLQGHRQDYTALKVTGIQL.

It belongs to the bacterial ribosomal protein bL21 family. In terms of assembly, part of the 50S ribosomal subunit. Contacts protein L20.

This protein binds to 23S rRNA in the presence of protein L20. The polypeptide is Large ribosomal subunit protein bL21 (Lawsonia intracellularis).